The sequence spans 176 residues: ATP-dependent protease subunit HslV (176 aa).

Residue Thr-2 is part of the active site. Na(+) is bound by residues Gly-157, Cys-160, and Thr-163.

The protein belongs to the peptidase T1B family. HslV subfamily. In terms of assembly, a double ring-shaped homohexamer of HslV is capped on each side by a ring-shaped HslU homohexamer. The assembly of the HslU/HslV complex is dependent on binding of ATP.

Its subcellular location is the cytoplasm. The enzyme catalyses ATP-dependent cleavage of peptide bonds with broad specificity.. With respect to regulation, allosterically activated by HslU binding. Functionally, protease subunit of a proteasome-like degradation complex believed to be a general protein degrading machinery. The protein is ATP-dependent protease subunit HslV of Erwinia tasmaniensis (strain DSM 17950 / CFBP 7177 / CIP 109463 / NCPPB 4357 / Et1/99).